A 314-amino-acid polypeptide reads, in one-letter code: Deoxymugineic acid synthase 1-D (314 aa).

The disordered stretch occupies residues 1–21 (MGAGEKTAAGMPRIGMGTAVQ). Residue Asp-44 coordinates NADP(+). Tyr-49 functions as the Proton donor in the catalytic mechanism. His-112 contributes to the substrate binding site. Residues 158–159 (AN), Gln-180, 258–266 (FDEARMREN), and 273–281 (ELTEEERLR) each bind NADP(+).

The protein belongs to the aldo/keto reductase family. As to expression, mostly expressed in root tissues, observed, at low levels, in mesocotyl and embryonic roots, seedling roots, crown and seedling leafes, mature bracts, anthers, pistil, caryopsis and embryos.

It catalyses the reaction 2'-deoxymugineate + NAD(+) = 3''-deamino-3''-oxonicotianamine + NADH + H(+). It carries out the reaction 2'-deoxymugineate + NADP(+) = 3''-deamino-3''-oxonicotianamine + NADPH + H(+). It functions in the pathway siderophore biosynthesis. Functionally, catalyzes the reduction of a 3''-keto intermediate during the biosynthesis of 2'-deoxymugineic acid (DMA) from L-Met. Involved in the formation of phytosiderophores (MAs) belonging to the mugineic acid family and required to acquire iron. In Triticum aestivum (Wheat), this protein is Deoxymugineic acid synthase 1-D.